We begin with the raw amino-acid sequence, 644 residues long: Far upstream element-binding protein 1 (644 aa).

Disordered stretches follow at residues 1-31 (MADY…NDAF) and 44-94 (KIGG…PMHQ). N-acetylalanine is present on Ala-2. Residues 14 to 27 (SAGGGGGGGGGGGV) are compositionally biased toward gly residues. 2 positions are modified to phosphoserine: Ser-52 and Ser-55. Residues 65 to 77 (RPLEDGDQPDAKK) are compositionally biased toward basic and acidic residues. Positions 81-94 (QNDSFGTQLPPMHQ) are enriched in polar residues. KH domains lie at 100–164 (VMTE…KRLL), 185–251 (NAVQ…KEMV), and 275–339 (NEGI…AEII). Ser-140 is modified (phosphoserine). Thr-153 carries the phosphothreonine modification. Omega-N-methylarginine is present on residues Arg-321, Arg-359, Arg-361, and Arg-363. The tract at residues 346-365 (VQAGNPGGPGPGGRGRGRGQ) is disordered. A compositionally biased stretch (gly residues) spans 350 to 365 (NPGGPGPGGRGRGRGQ). Residues 376 to 443 (LQEFNFIVPT…QQIDYARQLI (68 aa)) enclose the KH 4 domain. Thr-432 is modified (phosphothreonine). Disordered regions lie at residues 447-532 (IGGP…GTDP) and 548-580 (QAQP…AGQV). A compositionally biased stretch (pro residues) spans 468-505 (PHGPPGPPGPGTPMGPYNPAPYNPGPPGPAPHGPPAPY). The segment covering 556-573 (PAGAPTTTQTNGQGDQQN) has biased composition (low complexity). Position 630 is a phosphoserine (Ser-630).

In terms of assembly, found in a complex with PUF60 and far upstream element (FUSE) DNA segment. Interacts with PUF60 and JTV1. Ubiquitinated. This targets the protein for proteasome-mediated degradation.

The protein resides in the nucleus. In terms of biological role, regulates MYC expression by binding to a single-stranded far-upstream element (FUSE) upstream of the MYC promoter. May act both as activator and repressor of transcription. The protein is Far upstream element-binding protein 1 (FUBP1) of Homo sapiens (Human).